Here is a 396-residue protein sequence, read N- to C-terminus: FAD-dependent monooxygenase phomE' (396 aa).

Residue Glu-3 coordinates FAD. Residues Arg-158 and Tyr-196 contribute to the active site. Asp-277 and Gly-290 together coordinate FAD.

Belongs to the paxM FAD-dependent monooxygenase family. Monomer. Requires FAD as cofactor.

Its function is as follows. FAD-dependent monooxygenase; part of the gene cluster that mediates the biosynthesis of the phomopsins, a group of hexapeptide mycotoxins which infects lupins and causes lupinosis disease in livestock. The role of phomE' within the phomopsins biosynthesis pathway has still to be determined. The pathway starts with the processing of the precursor phomA by several endopeptidases including kexin proteases as well as the cluster-specific S41 family peptidase phomP1 and the oligopeptidase phomG to produce 10 identical copies of the hexapeptide Tyr-Val-Ile-Pro-Ile-Asp. After being excised from the precursor peptide, the core peptides are cyclized and modified post-translationally by enzymes encoded within the gene cluster. The timing and order of proteolysis of the phomA precursor and PTMs are still unknown. Two tyrosinase-like enzymes, phomQ1 and phomQ2, catalyze the chlorination and hydroxylation of Tyr, respectively. PhomYb, is proposed to be involved in the construction of the macrocyclic structure. The other 4 ustYa family proteins may be involved in PTMs that generate the unique structure of phomopsin A. PhomYa is required for the hydroxylation of C-beta of Tyr. PhomYc, phomYd, and phomYe are responsible for the biosynthesis of 2,3-dehydroisoleucine (dIle), 2,3-dehydroaspartic acid (dAsp), and 3,4-dehydroproline (dPro), respectively. While dIle formation by phomYc is indispensable for the installation of dAsp by phomYd, the order of the other PTMs have not been elucidated yet. Most of the biosynthetic enzymes likely have broad substrate specificity, and thus, there might be a metabolic grid from a precursor to phomopsin A. The enzyme(s) responsible for the biosynthesis of 3,4-dehydrovaline (dVal) have also not been identified yet. Finally, phomM acts as an S-adenosylmethionine-dependent alpha-N-methyltransferase that catalyzes two successive N-methylation reactions, converting N-desmethyl-phomopsin A to phomopsin A and phomopsin A further to an N,N-dimethylated congener called phomopsin E. This Diaporthe leptostromiformis (Lupinosis disease fungus) protein is FAD-dependent monooxygenase phomE'.